The chain runs to 101 residues: uncharacterized protein (101 aa).

This is an uncharacterized protein from Encephalitozoon cuniculi (strain GB-M1) (Microsporidian parasite).